The primary structure comprises 322 residues: Epiphycan (322 aa).

The N-terminal stretch at 1-19 is a signal peptide; the sequence is MKTLAGLVLGLVIFDAAVT. Thr-60 carries an O-linked (GalNAc...) threonine glycan. Ser-64 carries an O-linked (Xyl...) (dermatan sulfate) serine glycan. Residues 64-101 are disordered; sequence SGNRELLTPPPQPEKAQEEEEEEESTPRLIDGSSPQEP. Ser-96 carries an O-linked (GalNAc...) serine glycan. An LRRNT domain is found at 106-143; sequence VLGPHTNEDFPTCLLCTCISTTVYCDDHELDAIPPLPK. A disulfide bridge connects residues Cys-118 and Cys-130. LRR repeat units lie at residues 144–165, 168–189, 192–213, 238–258, and 259–280; these read NTAY…DFAS, DLKR…AFRK, QLRE…PTTL, DLHH…PLPE, and NLRA…TFCN. A disulfide bond links Cys-279 and Cys-312. Asn-283 and Asn-302 each carry an N-linked (GlcNAc...) asparagine glycan. Residues 290-310 form an LRR 6 repeat; the sequence is ALEDIRLDGNPINLSKTPQAY.

This sequence belongs to the small leucine-rich proteoglycan (SLRP) family. SLRP class III subfamily. In terms of processing, the O-linked polysaccharides on Thr-60 and Ser-96 are probably the mucin type linked to GalNAc. There is one glycosaminoglycan chain, known to be dermatan sulfate, and it is probably the O-glycosylation at Ser-64. Cartilage, ligament, and placenta.

It is found in the secreted. The protein resides in the extracellular space. Its subcellular location is the extracellular matrix. Its function is as follows. May have a role in bone formation and also in establishing the ordered structure of cartilage through matrix organization. The chain is Epiphycan (EPYC) from Homo sapiens (Human).